The primary structure comprises 564 residues: 2-succinyl-5-enolpyruvyl-6-hydroxy-3-cyclohexene-1-carboxylate synthase (564 aa).

The protein belongs to the TPP enzyme family. MenD subfamily. As to quaternary structure, homodimer. Mg(2+) is required as a cofactor. The cofactor is Mn(2+). Requires thiamine diphosphate as cofactor.

The catalysed reaction is isochorismate + 2-oxoglutarate + H(+) = 5-enolpyruvoyl-6-hydroxy-2-succinyl-cyclohex-3-ene-1-carboxylate + CO2. Its pathway is quinol/quinone metabolism; 1,4-dihydroxy-2-naphthoate biosynthesis; 1,4-dihydroxy-2-naphthoate from chorismate: step 2/7. It functions in the pathway quinol/quinone metabolism; menaquinone biosynthesis. Its function is as follows. Catalyzes the thiamine diphosphate-dependent decarboxylation of 2-oxoglutarate and the subsequent addition of the resulting succinic semialdehyde-thiamine pyrophosphate anion to isochorismate to yield 2-succinyl-5-enolpyruvyl-6-hydroxy-3-cyclohexene-1-carboxylate (SEPHCHC). This chain is 2-succinyl-5-enolpyruvyl-6-hydroxy-3-cyclohexene-1-carboxylate synthase, found in Photorhabdus laumondii subsp. laumondii (strain DSM 15139 / CIP 105565 / TT01) (Photorhabdus luminescens subsp. laumondii).